Reading from the N-terminus, the 380-residue chain is Queuine tRNA-ribosyltransferase (380 aa).

Catalysis depends on D93, which acts as the Proton acceptor. Substrate-binding positions include 93–97, D147, Q198, and G225; that span reads DSGGF. Positions 256–262 are RNA binding; sequence GVGLPSN. The Nucleophile role is filled by D275. The interval 280 to 284 is RNA binding; important for wobble base 34 recognition; it reads ARNGR. Residues C313, C315, C318, and H344 each coordinate Zn(2+).

This sequence belongs to the queuine tRNA-ribosyltransferase family. As to quaternary structure, homodimer. Within each dimer, one monomer is responsible for RNA recognition and catalysis, while the other monomer binds to the replacement base PreQ1. The cofactor is Zn(2+).

It carries out the reaction 7-aminomethyl-7-carbaguanine + guanosine(34) in tRNA = 7-aminomethyl-7-carbaguanosine(34) in tRNA + guanine. Its pathway is tRNA modification; tRNA-queuosine biosynthesis. Catalyzes the base-exchange of a guanine (G) residue with the queuine precursor 7-aminomethyl-7-deazaguanine (PreQ1) at position 34 (anticodon wobble position) in tRNAs with GU(N) anticodons (tRNA-Asp, -Asn, -His and -Tyr). Catalysis occurs through a double-displacement mechanism. The nucleophile active site attacks the C1' of nucleotide 34 to detach the guanine base from the RNA, forming a covalent enzyme-RNA intermediate. The proton acceptor active site deprotonates the incoming PreQ1, allowing a nucleophilic attack on the C1' of the ribose to form the product. After dissociation, two additional enzymatic reactions on the tRNA convert PreQ1 to queuine (Q), resulting in the hypermodified nucleoside queuosine (7-(((4,5-cis-dihydroxy-2-cyclopenten-1-yl)amino)methyl)-7-deazaguanosine). In Clostridium perfringens (strain ATCC 13124 / DSM 756 / JCM 1290 / NCIMB 6125 / NCTC 8237 / Type A), this protein is Queuine tRNA-ribosyltransferase.